The sequence spans 227 residues: Orotidine 5'-phosphate decarboxylase (227 aa).

Residues Asp-8, Lys-30, 59–68 (DLKLYDIPYT), Thr-118, Arg-178, Gln-187, Gly-207, and Arg-208 each bind substrate. Catalysis depends on Lys-61, which acts as the Proton donor.

It belongs to the OMP decarboxylase family. Type 1 subfamily. In terms of assembly, homodimer.

The enzyme catalyses orotidine 5'-phosphate + H(+) = UMP + CO2. It participates in pyrimidine metabolism; UMP biosynthesis via de novo pathway; UMP from orotate: step 2/2. Its function is as follows. Catalyzes the decarboxylation of orotidine 5'-monophosphate (OMP) to uridine 5'-monophosphate (UMP). This is Orotidine 5'-phosphate decarboxylase from Helicobacter pylori (strain ATCC 700392 / 26695) (Campylobacter pylori).